A 201-amino-acid polypeptide reads, in one-letter code: uncharacterized protein (201 aa).

This is an uncharacterized protein from Haemophilus influenzae (strain ATCC 51907 / DSM 11121 / KW20 / Rd).